Consider the following 394-residue polypeptide: Flavohemoprotein (394 aa).

One can recognise a Globin domain in the interval 1 to 136 (MLSENTINIV…LANVFIQREE (136 aa)). Residue H85 participates in heme b binding. Catalysis depends on charge relay system residues Y95 and E135. Residues 147–394 (GGWRGLREFE…YECFGPHKVV (248 aa)) are reductase. Positions 150-255 (RGLREFELVE…AAPAGDFFLD (106 aa)) constitute an FAD-binding FR-type domain. FAD is bound by residues Y188 and 204–207 (RQYS). Residue 268–273 (GVGLTP) participates in NADP(+) binding. 387 to 390 (CFGP) is an FAD binding site.

It belongs to the globin family. Two-domain flavohemoproteins subfamily. This sequence in the C-terminal section; belongs to the flavoprotein pyridine nucleotide cytochrome reductase family. Heme b is required as a cofactor. The cofactor is FAD.

It catalyses the reaction 2 nitric oxide + NADPH + 2 O2 = 2 nitrate + NADP(+) + H(+). It carries out the reaction 2 nitric oxide + NADH + 2 O2 = 2 nitrate + NAD(+) + H(+). In terms of biological role, is involved in NO detoxification in an aerobic process, termed nitric oxide dioxygenase (NOD) reaction that utilizes O(2) and NAD(P)H to convert NO to nitrate, which protects the bacterium from various noxious nitrogen compounds. Therefore, plays a central role in the inducible response to nitrosative stress. In Vibrio vulnificus (strain YJ016), this protein is Flavohemoprotein.